Consider the following 219-residue polypeptide: Transmembrane emp24 domain-containing protein 10 (219 aa).

The first 31 residues, 1-31 (MSGLSGPLSWPGPLLSALLFLFLLGPSSVLG), serve as a signal peptide directing secretion. The tract at residues 1 to 142 (MSGLSGPLSW…KNYEEIAKVE (142 aa)) is required for interaction with STX17. The Lumenal segment spans residues 32-185 (ISFHLPVNSR…RDTNESTNTR (154 aa)). One can recognise a GOLD domain in the interval 41-193 (RKCLREEIHK…TRVLYFSIFS (153 aa)). Residues 147-178 (LEVELRRLEDLSESIVNDFAYMKKREEEMRDT) are required for TMED10 and TMED2 cis-Golgi network localization. Dimethylated arginine occurs at positions 171 and 176. The N-linked (GlcNAc...) asparagine glycan is linked to Asn-179. The helical transmembrane segment at 186 to 206 (VLYFSIFSMFCLIGLATWQVF) threads the bilayer. The interval 204 to 219 (QVFYLRRFFKAKKLIE) is interaction with COPG1. Residues 207 to 219 (YLRRFFKAKKLIE) are Cytoplasmic-facing. Residues 207-219 (YLRRFFKAKKLIE) form an interaction with ARF1 and IL1B region. Positions 211-212 (FF) match the COPII vesicle coat-binding motif. Residues 211 to 219 (FFKAKKLIE) carry the COPI vesicle coat-binding motif.

It belongs to the EMP24/GP25L family. As to quaternary structure, predominantly dimeric and to a lesser extent monomeric in the ER. Monomer and dimer in ERGIC and cis-Golgi network. Forms homooligomer (via GOLD domain); the assembly is promoted by direct binding with leaderless cargos and may form a protein channel that facilitates cargo entry into the ERGIC. Forms heterooligomeric complexes with other members of the p24 family such as TMED2, TMED7 and TMED9. Interacts (via GOLD domain) with TMED2 (via GOLD domain); the complex is required for export of TMED10 from the ER to the cis-Golgi network; the complex is proposed to be involved in cis-Golgi network dynamics and / or biogenesis. Associates with the COPI vesicle coat subunits (coatomer). Tetramerization of the cytoplasmic domain at the Golgi membrane in vitro; the complex is proposed to interact with COPI coatomer and induce budding of the vesicles. Interacts with COPG1; the interaction involves TMED10 homodimer. Interacts with ARF1 (GDP-bound); the interaction probably involves a TMED10 oligomer. Interacts with SEC23A, SEC24B, SEC24C and SEC24D components of the coat protein complex II/COPII, indicative of an association of TMED10 with the COPII vesicle coat. Interacts with CD59. Interacts with MPPE1/PGAP5; the complex might recruit and sort GPI-anchored proteins to the ER-exit site, or the interaction might lead to recycling of PGAP5 between the ER and the Golgi. Interacts with F2LR1/PAR2. Interacts with KDELR2/ERD2; the interaction is disrupted by KDELR2 ligand. Found in a complex composed at least of SURF4, TMED2 and TMED10. Associates with the presenilin-dependent gamma-secretase complex. Interacts with STX17; the interaction is direct. Interacts with IL-1; the interaction is direct. Interacts with RAB21 (active GTP-bound form); the interaction is indirect and regulates TMED10 abundance and localization at the Golgi. As to expression, ubiquitous.

The protein resides in the endoplasmic reticulum membrane. It localises to the endoplasmic reticulum-Golgi intermediate compartment membrane. Its subcellular location is the golgi apparatus membrane. The protein localises to the golgi apparatus. It is found in the cis-Golgi network membrane. The protein resides in the trans-Golgi network membrane. It localises to the cytoplasmic vesicle. Its subcellular location is the secretory vesicle membrane. The protein localises to the cell membrane. It is found in the melanosome. In terms of biological role, cargo receptor involved in protein vesicular trafficking and quality control in the endoplasmic reticulum (ER) and Golgi. The p24 protein family is a group of transmembrane proteins that bind coat protein complex I/COPI and coat protein complex II/COPII involved in vesicular trafficking between the membranes. Acts at the lumenal side for incorporation of secretory cargo molecules into transport vesicles and involved in vesicle coat formation at the cytoplasmic side. Mainly functions in the early secretory pathway and cycles between the ER, ER-Golgi intermediate compartment (ERGIC) and Golgi, mediating cargo transport through COPI and COPII-coated vesicles. In COPII vesicle-mediated anterograde transport, involved in the transport of GPI-anchored proteins by acting together with TMED2 as their cargo receptor; the function specifically implies SEC24C and SEC24D of the COPII vesicle coat and lipid raft-like microdomains of the ER. Recognizes GPI anchors structural remodeled in the ER by the GPI inositol-deacylase/PGAP1 and the metallophosphoesterase MPPE1/PGAP5. In COPI vesicle-mediated retrograde transport, involved in the biogenesis of COPI vesicles and vesicle coat recruitment. Involved in trafficking of amyloid beta A4 protein and soluble APP-beta release (independent from the modulation of gamma-secretase activity). Involved in the KDELR2-mediated retrograde transport of the toxin A subunit (CTX-A-K63)together with COPI and the COOH terminus of KDELR2. On Golgi membranes, acts as a primary receptor for ARF1-GDP, a GTP-binding protein involved in COPI-vesicle formation. Increases coatomer-dependent GTPase-activating activity of ARFGAP2 which mediates the hydrolysis of ARF1-bound GTP and therefore modulates protein trafficking from the Golgi apparatus. Involved in the exocytic trafficking of G protein-coupled receptors F2LR1/PAR2 (trypsin and tryspin-like enzyme receptor), OPRM1 (opioid receptor) and P2RY4 (UTD and UDP receptor) from the Golgi to the plasma membrane, thus contributing to receptor resensitization. In addition to its cargo receptor activity, may also act as a protein channel after oligomerization, facilitating the post-translational entry of leaderless cytoplasmic cargo into the ERGIC. Involved in the translocation into ERGIC, the vesicle entry and the secretion of leaderless cargos (lacking the secretion signal sequence), including the mature form of interleukin 1/IL-1 family members, the alpha-crystallin B chain HSPB5, the carbohydrate-binding proteins galectin-1/LGALS1 and galectin-3/LGALS3, the microtubule-associated protein Tau/MAPT, and the annexin A1/ANXA1; the translocation process is dependent on cargo protein unfolding and enhanced by chaperones HSP90AB1 and HSP90B1/GRP9. Could also associates with the presenilin-dependent gamma-secretase complex in order to regulate gamma-cleavages of the amyloid beta A4 protein to yield amyloid-beta 40/Abeta40. The protein is Transmembrane emp24 domain-containing protein 10 of Rattus norvegicus (Rat).